We begin with the raw amino-acid sequence, 147 residues long: Hemoglobin subunit beta (147 aa).

Residues 3–147 (EWTDKERTII…VVSALGKQYH (145 aa)) form the Globin domain. Heme b contacts are provided by histidine 64 and histidine 93.

This sequence belongs to the globin family. As to quaternary structure, heterotetramer of two alpha chains and two beta chains. Red blood cells.

Involved in oxygen transport from gills to the various peripheral tissues. This is Hemoglobin subunit beta from Trematomus newnesi (Dusky notothen).